The sequence spans 81 residues: RNA-binding protein Hfq (81 aa).

The Sm domain maps to 10-69 (DPFLNTLRKEHIPVSIYLVNGIKLQGHIDSFDQYVVLLKNTVTQMVYKHAISTVVPARAV).

The protein belongs to the Hfq family. As to quaternary structure, homohexamer.

Its function is as follows. RNA chaperone that binds small regulatory RNA (sRNAs) and mRNAs to facilitate mRNA translational regulation in response to envelope stress, environmental stress and changes in metabolite concentrations. Also binds with high specificity to tRNAs. The sequence is that of RNA-binding protein Hfq from Nitrosospira multiformis (strain ATCC 25196 / NCIMB 11849 / C 71).